The chain runs to 922 residues: Coronin-7 (922 aa).

WD repeat units lie at residues 75 to 115 (CHSD…EALP), 124 to 163 (PEEL…HLTE), 166 to 205 (AHKD…QASQ), and 209 to 253 (AHEN…SALA). The tract at residues 386–462 (NPAHRPHPRF…TSPSQRSLQS (77 aa)) is disordered. Low complexity predominate over residues 423 to 456 (SEGFSSPSSLVSPSTPSSLGLSLSSTSGIGTSPS). A phosphoserine mark is found at S459 and S462. Residue K469 forms a Glycyl lysine isopeptide (Lys-Gly) (interchain with G-Cter in ubiquitin) linkage. 4 WD repeats span residues 539–579 (QNGA…LKNV), 589–629 (GHTE…EQLR), 632–671 (GHQD…LPLQ), and 725–765 (DVAP…PFFL). A disordered region spans residues 854–922 (LQPPGMTPVS…FEGVDEDEWD (69 aa)). T874 carries the post-translational modification Phosphothreonine. Basic and acidic residues predominate over residues 881–893 (LEEKSDQQKKEEL). Position 912 is a phosphoserine (S912).

Belongs to the WD repeat coronin family. As to quaternary structure, interacts with clathrin adapter AP1 complex. This interaction takes place at Golgi membranes and not AP1-positive endosomal membranes. Interacts (when ubiquitinated at Lys-469) with EPS15. Post-translationally, the membrane-associated form is phosphorylated on tyrosine residues. In terms of processing, ubiquitinated via 'Lys-33'-linked ubiquitin chains by the BCR(KLHL20) E3 ubiquitin ligase complex: 'Lys-33'-linked ubiquitination promotes interaction with EPS15 and facilitates actin polymerization at the trans-Golgi network, thereby facilitating post-Golgi trafficking. Deubiquitinated by ZRANB1/TRABID.

It is found in the golgi apparatus membrane. Its subcellular location is the golgi apparatus. It localises to the trans-Golgi network. The protein localises to the cytoplasmic vesicle. The protein resides in the cytoplasm. It is found in the cytosol. Its function is as follows. F-actin regulator involved in anterograde Golgi to endosome transport: upon ubiquitination via 'Lys-33'-linked ubiquitin chains by the BCR(KLHL20) E3 ubiquitin ligase complex, interacts with EPS15 and localizes to the trans-Golgi network, where it promotes actin polymerization, thereby facilitating post-Golgi trafficking. May play a role in the maintenance of the Golgi apparatus morphology. This is Coronin-7 (Coro7) from Rattus norvegicus (Rat).